We begin with the raw amino-acid sequence, 740 residues long: Putative Pol polyprotein from transposon element Bs1 (740 aa).

A PPR repeat occupies 469–503 (TAVAHNLLVQALFMDGRASDAYVVLEEMQNNGPFP).

Its function is as follows. Bs1 is probably an active plant retrotransposon. The sequence is that of Putative Pol polyprotein from transposon element Bs1 from Zea mays (Maize).